The chain runs to 337 residues: Schlafen family member 1 (337 aa).

A disordered region spans residues 147–166; the sequence is AGGRSPSARPSDRPGDDTQE. Basic and acidic residues predominate over residues 156–166; that stretch reads PSDRPGDDTQE.

The protein belongs to the Schlafen family. Interacts with DNAJB6; promoting nuclear translocation and ability to promote cell-cycle arrest. In terms of tissue distribution, mainly expressed in the thymus, lymph node and spleen. Specifically expressed in T-lineage cells, but not in B-cells. Strongly up-regulated during the differentiation from CD4(+)CD8(+) double-positive (DP) to CD4(+) or CD8(+) single-positive (SP) thymocytes. Highly expressed in quiescent single-positive thymocytes and T-cells. The expression substantially decreases after TCR (T-cell receptor)-mediated activation.

The protein resides in the cytoplasm. The protein localises to the nucleus. Protein expressed in resting T-cells, which is required for maintaining T-cells in the quiescent state. Acts by promoting cell-cycle arrest of T-cells through inhibiting the expression of cyclin-D1 (CCND1). The chain is Schlafen family member 1 from Mus musculus (Mouse).